We begin with the raw amino-acid sequence, 104 residues long: Large ribosomal subunit protein uL23 (104 aa).

It belongs to the universal ribosomal protein uL23 family. Part of the 50S ribosomal subunit. Contacts protein L29, and trigger factor when it is bound to the ribosome.

Functionally, one of the early assembly proteins it binds 23S rRNA. One of the proteins that surrounds the polypeptide exit tunnel on the outside of the ribosome. Forms the main docking site for trigger factor binding to the ribosome. The chain is Large ribosomal subunit protein uL23 from Ralstonia nicotianae (strain ATCC BAA-1114 / GMI1000) (Ralstonia solanacearum).